Here is a 231-residue protein sequence, read N- to C-terminus: Orotidine 5'-phosphate decarboxylase (231 aa).

Substrate contacts are provided by residues Asp-11, Lys-34, 61–70 (DLKLHDIPNT), Thr-117, Arg-179, Gln-188, Gly-208, and Arg-209. The active-site Proton donor is Lys-63.

This sequence belongs to the OMP decarboxylase family. Type 1 subfamily. As to quaternary structure, homodimer.

It carries out the reaction orotidine 5'-phosphate + H(+) = UMP + CO2. Its pathway is pyrimidine metabolism; UMP biosynthesis via de novo pathway; UMP from orotate: step 2/2. Catalyzes the decarboxylation of orotidine 5'-monophosphate (OMP) to uridine 5'-monophosphate (UMP). The chain is Orotidine 5'-phosphate decarboxylase from Streptococcus thermophilus (strain ATCC BAA-491 / LMD-9).